The sequence spans 1183 residues: Chromosome partition protein Smc (1183 aa).

32–39 (PNGSGKSN) lines the ATP pocket. Positions 162–483 (EEAAGIKKLQ…KLSQDIREFE (322 aa)) form a coiled coil. Positions 519–632 (SGIDGVLISL…VENIDIATDI (114 aa)) constitute an SMC hinge domain. Residues 666–1019 (INQIFERKKE…VMDLIQEIDE (354 aa)) are a coiled coil.

This sequence belongs to the SMC family. As to quaternary structure, homodimer.

The protein resides in the cytoplasm. Functionally, required for chromosome condensation and partitioning. The sequence is that of Chromosome partition protein Smc from Fusobacterium nucleatum subsp. nucleatum (strain ATCC 25586 / DSM 15643 / BCRC 10681 / CIP 101130 / JCM 8532 / KCTC 2640 / LMG 13131 / VPI 4355).